A 377-amino-acid polypeptide reads, in one-letter code: Glutamate 5-kinase (377 aa).

ATP is bound at residue Lys21. Substrate-binding residues include Ser61, Asp149, and Asn161. Residues 181 to 182 and 223 to 229 contribute to the ATP site; these read SD and SGGMTSK. The PUA domain occupies 286-363; the sequence is RGSVQVDAGA…REHEELLGYA (78 aa).

The protein belongs to the glutamate 5-kinase family.

The protein resides in the cytoplasm. It carries out the reaction L-glutamate + ATP = L-glutamyl 5-phosphate + ADP. Its pathway is amino-acid biosynthesis; L-proline biosynthesis; L-glutamate 5-semialdehyde from L-glutamate: step 1/2. Functionally, catalyzes the transfer of a phosphate group to glutamate to form L-glutamate 5-phosphate. In Novosphingobium aromaticivorans (strain ATCC 700278 / DSM 12444 / CCUG 56034 / CIP 105152 / NBRC 16084 / F199), this protein is Glutamate 5-kinase.